The chain runs to 224 residues: Proline/serine-rich protein C17A5.10 (224 aa).

A compositionally biased stretch (pro residues) spans 1-10 (MTDDSVPPPS). The disordered stretch occupies residues 1–110 (MTDDSVPPPS…SNYNTAKPPY (110 aa)). A compositionally biased stretch (low complexity) spans 31–52 (TSTSAGHPSSSSSTLPNYAASS). Composition is skewed to polar residues over residues 53-68 (LNSR…NAYS), 77-94 (PTSQ…STMY), and 101-110 (SNYNTAKPPY).

It belongs to the HUA1 family.

The protein localises to the cytoplasm. In terms of biological role, may be involved in assembly and disassembly of the actin cytoskeleton. In Schizosaccharomyces pombe (strain 972 / ATCC 24843) (Fission yeast), this protein is Proline/serine-rich protein C17A5.10.